The primary structure comprises 141 residues: Large ribosomal subunit protein uL11 (141 aa).

The protein belongs to the universal ribosomal protein uL11 family. Part of the ribosomal stalk of the 50S ribosomal subunit. Interacts with L10 and the large rRNA to form the base of the stalk. L10 forms an elongated spine to which L12 dimers bind in a sequential fashion forming a multimeric L10(L12)X complex. One or more lysine residues are methylated.

Forms part of the ribosomal stalk which helps the ribosome interact with GTP-bound translation factors. The protein is Large ribosomal subunit protein uL11 of Chlamydia abortus (strain DSM 27085 / S26/3) (Chlamydophila abortus).